The chain runs to 801 residues: H(+)/Cl(-) exchange transporter 3 (801 aa).

Residues 1–125 lie on the Cytoplasmic side of the membrane; sequence MESEQLFHRG…WEMTKSLYDA (125 aa). 3 short sequence motifs (di-leucine internalization motif; mediates targeting to late endosome and lysosome membranes) span residues 28–29, 46–47, and 71–75; these read LL and LLDLL. Residues 126–163 form a helical membrane-spanning segment; that stretch reads WSGWLVVTLTGLASGALAGLIDIAADWMTDLKEGICLS. Asn177 carries an N-linked (GlcNAc...) asparagine glycan. Residues 209-232 traverse the membrane as a helical segment; sequence MNYIMYIFWALSFAFLAVSLVKVF. A Selectivity filter part_1 motif is present at residues 238–242; the sequence is GSGIP. Ser239 lines the chloride pocket. Positions 241 to 248 form an intramembrane region, helical; sequence IPEIKTIL. Helical transmembrane passes span 258–276 and 282–301; these read GKWT…VASG and EGPL…YLFP. A Selectivity filter part_2 motif is present at residues 280–284; sequence GKEGP. 2 intramembrane regions (helical) span residues 313 to 325 and 329 to 337; these read VLSA…VSVA and PIGGVLFSL. The next 3 membrane-spanning stretches (helical) occupy residues 349–367, 391–416, and 423–443; these read LWRS…RSIN, FPFI…AWCR, and FGKY…VIAF. Asn451 and Asn479 each carry an N-linked (GlcNAc...) asparagine glycan. The chain crosses the membrane as a helical span at residues 500–520; sequence IWQLCLALIFKIIMTVFTFGI. The short motif at 525–529 is the Selectivity filter part_3 element; it reads GLFIP. Phe527 contributes to the chloride binding site. Intramembrane regions (helical) lie at residues 555-569 and 573-584; these read GLYA…LGGV and TVSLVVIVFELT. Positions 585 to 588 form an intramembrane region, note=Loop between two helices; that stretch reads GGLE. The helical transmembrane segment at 589–607 threads the bilayer; that stretch reads YIVPLMAAVMTSKWVGDAF. Residues 608-801 are Cytoplasmic-facing; that stretch reads GREGIYEAHI…NQDPASIMFN (194 aa). Tyr613 contributes to the chloride binding site. CBS domains lie at 641–705 and 738–795; these read MRPR…ARKK and LDMS…NQDP. Residues 672-674 and 779-782 contribute to the ATP site; these read YNG and TKKD.

This sequence belongs to the chloride channel (TC 2.A.49) family. ClC-3/CLCN3 subfamily. Monomer and homodimer. Forms heterodimers with CLCN4. N-glycosylated.

The protein resides in the early endosome membrane. Its subcellular location is the late endosome membrane. The protein localises to the lysosome membrane. It localises to the cell membrane. Strongly outwardly rectifying, electrogenic H(+)/Cl(-)exchanger which mediates the exchange of chloride ions against protons. The CLC channel family contains both chloride channels and proton-coupled anion transporters that exchange chloride or another anion for protons. The presence of conserved gating glutamate residues is typical for family members that function as antiporters. This chain is H(+)/Cl(-) exchange transporter 3 (CLCN3), found in Pongo abelii (Sumatran orangutan).